Here is a 415-residue protein sequence, read N- to C-terminus: 3-isopropylmalate dehydratase large subunit (415 aa).

The [4Fe-4S] cluster site is built by Cys-295, Cys-353, and Cys-356.

This sequence belongs to the aconitase/IPM isomerase family. LeuC type 2 subfamily. As to quaternary structure, heterodimer of LeuC and LeuD. [4Fe-4S] cluster serves as cofactor.

The enzyme catalyses (2R,3S)-3-isopropylmalate = (2S)-2-isopropylmalate. Its pathway is amino-acid biosynthesis; L-leucine biosynthesis; L-leucine from 3-methyl-2-oxobutanoate: step 2/4. Catalyzes the isomerization between 2-isopropylmalate and 3-isopropylmalate, via the formation of 2-isopropylmaleate. In Pyrobaculum arsenaticum (strain DSM 13514 / JCM 11321 / PZ6), this protein is 3-isopropylmalate dehydratase large subunit.